A 305-amino-acid chain; its full sequence is UDP-N-acetylenolpyruvoylglucosamine reductase (305 aa).

The region spanning 37-202 (GIGGPARFLA…LSVTFNLEPK (166 aa)) is the FAD-binding PCMH-type domain. Arg-183 is an active-site residue.

This sequence belongs to the MurB family. FAD serves as cofactor.

The protein localises to the cytoplasm. The enzyme catalyses UDP-N-acetyl-alpha-D-muramate + NADP(+) = UDP-N-acetyl-3-O-(1-carboxyvinyl)-alpha-D-glucosamine + NADPH + H(+). It participates in cell wall biogenesis; peptidoglycan biosynthesis. In terms of biological role, cell wall formation. The sequence is that of UDP-N-acetylenolpyruvoylglucosamine reductase from Rhodopirellula baltica (strain DSM 10527 / NCIMB 13988 / SH1).